The sequence spans 531 residues: Cytochrome P450 monooxygenase peniB (531 aa).

A helical transmembrane segment spans residues I30–F48. A heme-binding site is contributed by C445.

It belongs to the cytochrome P450 family. Heme serves as cofactor.

Its subcellular location is the membrane. The enzyme catalyses silphinene-15-oate + 2 reduced [NADPH--hemoprotein reductase] + 2 O2 = gamma-lactone-2-keto[5.5.5.5]fenestrane + 2 oxidized [NADPH--hemoprotein reductase] + 3 H2O + H(+). It functions in the pathway secondary metabolite biosynthesis; terpenoid biosynthesis. Cytochrome P450 monooxygenase; part of the gene cluster that mediates the biosynthesis of penifulvin A, a potent insecticidal sesquiterpene that features a [5.5.5.6]dioxafenestrane ring. Within the pathway, peniB catalyzes the multi-step oxidation of silphinene to synthesize gamma-lactone-2-keto[5.5.5.5]fenestrane, including oxidation of the C15 methylgroup in silphinene to form silphinene-15-oic acid, activationof the C1-C2 double bond to form the gamma-lactone-2-hydroxy[5.5.5.5]fenestrane, and dehydrogenation of the hydroxy group at C2 of gamma-lactone-2-hydroxy[5.5.5.5]fenestrane to generate gamma-lactone-2-keto[5.5.5.5]fenestrane. The first step of the pathway is performed by the sesquiterpene cyclase peniA that generates the angular triquinane scaffold silphinene via cyclization of the linear farnesyl pyrophosphate (FPP). The cytochrome P450 monooxygenase peniB and the flavin-dependent monooxygenase peniC then catalyze a series of oxidation reactions to transform silphinene into penifulvin A. This Penicillium patulum (Penicillium griseofulvum) protein is Cytochrome P450 monooxygenase peniB.